The following is a 371-amino-acid chain: 4-hydroxy-3-methylbut-2-en-1-yl diphosphate synthase (flavodoxin) (371 aa).

[4Fe-4S] cluster contacts are provided by Cys271, Cys274, Cys306, and Glu313.

Belongs to the IspG family. [4Fe-4S] cluster is required as a cofactor.

The catalysed reaction is (2E)-4-hydroxy-3-methylbut-2-enyl diphosphate + oxidized [flavodoxin] + H2O + 2 H(+) = 2-C-methyl-D-erythritol 2,4-cyclic diphosphate + reduced [flavodoxin]. It functions in the pathway isoprenoid biosynthesis; isopentenyl diphosphate biosynthesis via DXP pathway; isopentenyl diphosphate from 1-deoxy-D-xylulose 5-phosphate: step 5/6. Functionally, converts 2C-methyl-D-erythritol 2,4-cyclodiphosphate (ME-2,4cPP) into 1-hydroxy-2-methyl-2-(E)-butenyl 4-diphosphate. The protein is 4-hydroxy-3-methylbut-2-en-1-yl diphosphate synthase (flavodoxin) of Actinobacillus succinogenes (strain ATCC 55618 / DSM 22257 / CCUG 43843 / 130Z).